The chain runs to 263 residues: HTH-type transcriptional repressor NanR (263 aa).

In terms of domain architecture, HTH gntR-type spans 30–98 (KKLSEMVEEE…NGERARVSRP (69 aa)). Residues 58-77 (ERELMAFFNVGRPSVREALA) constitute a DNA-binding region (H-T-H motif).

Belongs to the NanR family.

Transcriptional repressor that controls expression of the genes required for the catabolism of sialic acids. The sequence is that of HTH-type transcriptional repressor NanR from Salmonella arizonae (strain ATCC BAA-731 / CDC346-86 / RSK2980).